The primary structure comprises 92 residues: Large ribosomal subunit protein eL43 (92 aa).

Positions 39, 42, 57, and 60 each coordinate Zn(2+).

Belongs to the eukaryotic ribosomal protein eL43 family. In terms of assembly, component of the large ribosomal subunit. Mature ribosomes consist of a small (40S) and a large (60S) subunit. The 40S subunit contains 32 different proteins and 1 molecule of RNA (18S). The 60S subunit contains 45 different proteins and 3 molecules of RNA (25S, 5.8S and 5S). Zn(2+) is required as a cofactor.

It localises to the cytoplasm. Its function is as follows. Component of the ribosome, a large ribonucleoprotein complex responsible for the synthesis of proteins in the cell. The small ribosomal subunit (SSU) binds messenger RNAs (mRNAs) and translates the encoded message by selecting cognate aminoacyl-transfer RNA (tRNA) molecules. The large subunit (LSU) contains the ribosomal catalytic site termed the peptidyl transferase center (PTC), which catalyzes the formation of peptide bonds, thereby polymerizing the amino acids delivered by tRNAs into a polypeptide chain. The nascent polypeptides leave the ribosome through a tunnel in the LSU and interact with protein factors that function in enzymatic processing, targeting, and the membrane insertion of nascent chains at the exit of the ribosomal tunnel. The chain is Large ribosomal subunit protein eL43 from Candida albicans (strain SC5314 / ATCC MYA-2876) (Yeast).